The sequence spans 155 residues: Endoribonuclease YbeY (155 aa).

The Zn(2+) site is built by His-114, His-118, and His-124.

This sequence belongs to the endoribonuclease YbeY family. It depends on Zn(2+) as a cofactor.

The protein localises to the cytoplasm. Functionally, single strand-specific metallo-endoribonuclease involved in late-stage 70S ribosome quality control and in maturation of the 3' terminus of the 16S rRNA. The chain is Endoribonuclease YbeY from Proteus mirabilis (strain HI4320).